We begin with the raw amino-acid sequence, 472 residues long: Na(+)/H(+) antiporter NhaA (472 aa).

A run of 11 helical transmembrane segments spans residues 48-68, 91-111, 129-149, 157-177, 185-205, 210-230, 237-257, 337-357, 374-394, 410-430, and 443-463; these read AGGIVLMGTTVLTLIAANSAW, MSLHDLINDGLMSLFFLVVGL, ALPVFAAAGGMVVPALVYFAV, AGWGIPMATDIAFAVGILVLL, LIIFLTALAIADDLGAVLVIA, HEISLGAIGFASAVLFLLLLL, HAIPYGVLGVLLWMALHHSGV, GPWVTFIVIPLFALNNVGIDF, VCLGLVFGKFTGISVFSWIAV, LLGVAWLGGIGFTMSLFISQL, and LGILTASLLSAMIGMTWLYFG.

It belongs to the NhaA Na(+)/H(+) (TC 2.A.33) antiporter family.

It is found in the cell inner membrane. It catalyses the reaction Na(+)(in) + 2 H(+)(out) = Na(+)(out) + 2 H(+)(in). In terms of biological role, na(+)/H(+) antiporter that extrudes sodium in exchange for external protons. This is Na(+)/H(+) antiporter NhaA from Syntrophobacter fumaroxidans (strain DSM 10017 / MPOB).